Consider the following 354-residue polypeptide: Holliday junction branch migration complex subunit RuvB (354 aa).

The tract at residues 1–22 (MTLQTDDFAPAPARRVVSAAPA) is disordered. Residues 5–194 (TDDFAPAPAR…FGIVARLEFY (190 aa)) are large ATPase domain (RuvB-L). The span at 9–22 (APAPARRVVSAAPA) shows a compositional bias: low complexity. Residues leucine 33, arginine 34, glycine 75, lysine 78, threonine 79, threonine 80, 141-143 (EDY), arginine 184, tyrosine 194, and arginine 231 each bind ATP. Threonine 79 contributes to the Mg(2+) binding site. Residues 195-265 (SAQELARIVK…IAERALAMLD (71 aa)) are small ATPAse domain (RuvB-S). The head domain (RuvB-H) stretch occupies residues 268–354 (PEGLDVMDRK…GAQAPGLFAV (87 aa)). DNA is bound by residues arginine 323 and arginine 328.

It belongs to the RuvB family. As to quaternary structure, homohexamer. Forms an RuvA(8)-RuvB(12)-Holliday junction (HJ) complex. HJ DNA is sandwiched between 2 RuvA tetramers; dsDNA enters through RuvA and exits via RuvB. An RuvB hexamer assembles on each DNA strand where it exits the tetramer. Each RuvB hexamer is contacted by two RuvA subunits (via domain III) on 2 adjacent RuvB subunits; this complex drives branch migration. In the full resolvosome a probable DNA-RuvA(4)-RuvB(12)-RuvC(2) complex forms which resolves the HJ.

It localises to the cytoplasm. The catalysed reaction is ATP + H2O = ADP + phosphate + H(+). In terms of biological role, the RuvA-RuvB-RuvC complex processes Holliday junction (HJ) DNA during genetic recombination and DNA repair, while the RuvA-RuvB complex plays an important role in the rescue of blocked DNA replication forks via replication fork reversal (RFR). RuvA specifically binds to HJ cruciform DNA, conferring on it an open structure. The RuvB hexamer acts as an ATP-dependent pump, pulling dsDNA into and through the RuvAB complex. RuvB forms 2 homohexamers on either side of HJ DNA bound by 1 or 2 RuvA tetramers; 4 subunits per hexamer contact DNA at a time. Coordinated motions by a converter formed by DNA-disengaged RuvB subunits stimulates ATP hydrolysis and nucleotide exchange. Immobilization of the converter enables RuvB to convert the ATP-contained energy into a lever motion, pulling 2 nucleotides of DNA out of the RuvA tetramer per ATP hydrolyzed, thus driving DNA branch migration. The RuvB motors rotate together with the DNA substrate, which together with the progressing nucleotide cycle form the mechanistic basis for DNA recombination by continuous HJ branch migration. Branch migration allows RuvC to scan DNA until it finds its consensus sequence, where it cleaves and resolves cruciform DNA. The polypeptide is Holliday junction branch migration complex subunit RuvB (Verminephrobacter eiseniae (strain EF01-2)).